Reading from the N-terminus, the 111-residue chain is Type III endosome membrane protein TEMP (111 aa).

At 1–27 (MIGGNTTIISGAINASTEAPGLGTGGR) the chain is on the extracellular side. A glycan (N-linked (GlcNAc...) asparagine) is linked at N5. Residues 28-48 (AWPVLVGVVLGAVVLSILIAL) traverse the membrane as a helical; Signal-anchor for type III membrane protein segment. Over 49–111 (AAKCHLCRRY…TTGSRDHFSL (63 aa)) the chain is Cytoplasmic. A disordered region spans residues 64-111 (HRPLSSAGGGNRPPVGEDEDDDGFIEDNYIQPGAGEMETTGSRDHFSL). The segment covering 79 to 88 (GEDEDDDGFI) has biased composition (acidic residues).

Expressed in stomach, kidney, large and small intestine and kidney.

It is found in the membrane. Its subcellular location is the early endosome. It localises to the recycling endosome. The protein resides in the cell membrane. Its function is as follows. May be involved in membrane trafficking between endosomes and plasma membrane. In Mus musculus (Mouse), this protein is Type III endosome membrane protein TEMP.